Consider the following 183-residue polypeptide: Archaemetzincin (183 aa).

H131 lines the Zn(2+) pocket. The active-site Proton acceptor is the E132. Positions 135, 141, 142, 147, 166, and 169 each coordinate Zn(2+).

This sequence belongs to the peptidase M54 family. As to quaternary structure, monomer. Zn(2+) is required as a cofactor.

Probable zinc metalloprotease whose natural substrate is unknown. This chain is Archaemetzincin, found in Saccharolobus islandicus (strain L.S.2.15 / Lassen #1) (Sulfolobus islandicus).